A 188-amino-acid polypeptide reads, in one-letter code: Elongation factor P (188 aa).

The protein belongs to the elongation factor P family.

The protein resides in the cytoplasm. The protein operates within protein biosynthesis; polypeptide chain elongation. Functionally, involved in peptide bond synthesis. Stimulates efficient translation and peptide-bond synthesis on native or reconstituted 70S ribosomes in vitro. Probably functions indirectly by altering the affinity of the ribosome for aminoacyl-tRNA, thus increasing their reactivity as acceptors for peptidyl transferase. The sequence is that of Elongation factor P from Ralstonia nicotianae (strain ATCC BAA-1114 / GMI1000) (Ralstonia solanacearum).